Consider the following 423-residue polypeptide: UPF0229 protein PSPA7_0730 (423 aa).

The tract at residues 84-107 (AGEHIARPSGGGGGRGGGKASNSG) is disordered. The segment covering 92-102 (SGGGGGRGGGK) has biased composition (gly residues).

Belongs to the UPF0229 family.

This is UPF0229 protein PSPA7_0730 from Pseudomonas paraeruginosa (strain DSM 24068 / PA7) (Pseudomonas aeruginosa (strain PA7)).